The sequence spans 240 residues: Keratinocyte-associated protein 3 (240 aa).

4 consecutive transmembrane segments (helical) span residues 21–41, 63–83, 95–115, and 163–183; these read VGLA…VLHG, VISV…LLAS, LLTL…GLLL, and ALAL…LSGY.

The protein belongs to the TMEM54 family.

The protein resides in the membrane. The sequence is that of Keratinocyte-associated protein 3 (Krtcap3) from Mus musculus (Mouse).